Here is a 177-residue protein sequence, read N- to C-terminus: ATP-dependent protease subunit HslV (177 aa).

The active site involves T5. The Na(+) site is built by G161, C164, and T167.

This sequence belongs to the peptidase T1B family. HslV subfamily. As to quaternary structure, a double ring-shaped homohexamer of HslV is capped on each side by a ring-shaped HslU homohexamer. The assembly of the HslU/HslV complex is dependent on binding of ATP.

It is found in the cytoplasm. It catalyses the reaction ATP-dependent cleavage of peptide bonds with broad specificity.. With respect to regulation, allosterically activated by HslU binding. Functionally, protease subunit of a proteasome-like degradation complex believed to be a general protein degrading machinery. This is ATP-dependent protease subunit HslV from Campylobacter concisus (strain 13826).